The primary structure comprises 295 residues: Phosphoribosylaminoimidazole-succinocarboxamide synthase (295 aa).

The protein belongs to the SAICAR synthetase family.

It catalyses the reaction 5-amino-1-(5-phospho-D-ribosyl)imidazole-4-carboxylate + L-aspartate + ATP = (2S)-2-[5-amino-1-(5-phospho-beta-D-ribosyl)imidazole-4-carboxamido]succinate + ADP + phosphate + 2 H(+). The protein operates within purine metabolism; IMP biosynthesis via de novo pathway; 5-amino-1-(5-phospho-D-ribosyl)imidazole-4-carboxamide from 5-amino-1-(5-phospho-D-ribosyl)imidazole-4-carboxylate: step 1/2. The sequence is that of Phosphoribosylaminoimidazole-succinocarboxamide synthase from Corynebacterium ammoniagenes (Brevibacterium ammoniagenes).